The sequence spans 1248 residues: Reverse gyrase 1 (1248 aa).

Residues 7–44 (IPPSIYLFSCPNCGRSISTYRLLLGSVCNICLEEDKEY) form an RG N-terminal-type zinc finger. Zn(2+) contacts are provided by Cys16, Cys19, Cys34, and Cys37. ATP contacts are provided by residues Gln92 and 109–116 (APPGLGKT). The Helicase ATP-binding domain maps to 96 to 262 (IYRLLSGESF…KKYRENTQKN (167 aa)). The DEAD box motif lies at 219–222 (DDVD). The tract at residues 621–1248 (QKVKTVLLVV…QVYEEINEIR (628 aa)) is topoisomerase I. The Toprim domain occupies 625-789 (TVLLVVESPN…NIRRAEFHEV (165 aa)). A Mg(2+)-binding site is contributed by Glu631. The RG C-terminal-type; atypical zinc finger occupies 706–735 (IKKCENNHQFTDFFESNKCPRCMTTKVRYD). The Zn(2+) site is built by Cys709, His713, Cys724, and Cys727. Residue Asp758 coordinates Mg(2+). One can recognise a Topo IA-type catalytic domain in the interval 805–1248 (NVNLVKSQLV…QVYEEINEIR (444 aa)). The active-site O-(5'-phospho-DNA)-tyrosine intermediate is the Tyr965.

This sequence in the N-terminal section; belongs to the DEAD box helicase family. DDVD subfamily. In the C-terminal section; belongs to the type IA topoisomerase family. As to quaternary structure, monomer. Zn(2+) is required as a cofactor. Requires Mg(2+) as cofactor. Post-translationally, the N-terminus is blocked.

It is found in the cytoplasm. The enzyme catalyses ATP + H2O = ADP + phosphate + H(+). Its function is as follows. Modifies the topological state of DNA by introducing positive supercoils in an ATP-dependent process. Increases the linking number in steps of +1. Has a DNA-stimulated ATPase activity; closed circular ssDNA stimulates ATPase much better than dsDNA although negative supercoiled, positive supercoiled and relaxed dsDNA all stimulate ATPase activity. All NTPs permit topoisomerization (relaxation) of negatively supercoiled dsDNA without nucleotide hydrolysis. It transiently cleaves a single DNA strand and remains covalently bound to the 5' DNA end. Acts via a tyrosine residue. Reverse gyrase binds and unwinds DNA independently of ATP binding and DNA cleavage. May be involved in rewinding the DNA strands in the regions of the chromosome that have opened up to allow transcription or replication, probably acts via ssDNA regions of the chromosome. The chain is Reverse gyrase 1 from Sulfolobus acidocaldarius (strain ATCC 33909 / DSM 639 / JCM 8929 / NBRC 15157 / NCIMB 11770).